The chain runs to 515 residues: MTMQTMTAASGHDAEAGTPPDGPLLALDGITVTFPGVRALDAVSLSVRAGEVHGLMGENGAGKSTLLKVLSGVNQPQAGTLTLNGTAQRFASTRAALEAGIAIIYQELHLVPELTVAENLMLGQLPSRLGVVDERTLAARALDALERLGEHIDPGIPVKYLSIGQRQMIEIGKALMRHARVIAFDEPTSSLSARETTQLFRIIRALRAEGRAIIYVTHRMEEVYELCDRVTVFRDGRRIDTFDSVADLDRDRLIGCMVGRSIEDVYGYRSRPAGDVLIEAKGLAGPGLAEPVSFTARRGEIVGFFGLVGAGRSELMKLLYGAVRPSAGHVELNGKRVAFGSPRDAVRAGIALCPEDRKQEGIVAIASVADNLNISARRHFSPARVLLDGRRERELAQKYIERLAIKTRDGDTPIGALSGGNQQKVVLARWLAERIDVFLMDEPTRGIDVGARAEIYNLFYELAEAGRTVILVSSDLAEVIGVSDRIVVMKEGRIAGEVAKAHATPDALIKLALPR.

Residues 1–22 (MTMQTMTAASGHDAEAGTPPDG) form a disordered region. ABC transporter domains are found at residues 25-260 (LALD…MVGR) and 260-511 (RSIE…LIKL). Residue 57-64 (GENGAGKS) participates in ATP binding.

The protein belongs to the ABC transporter superfamily. Arabinose importer (TC 3.A.1.2.2) family. In terms of assembly, the complex is composed of two ATP-binding proteins (AraG), two transmembrane proteins (AraH) and a solute-binding protein (AraF).

The protein resides in the cell inner membrane. It carries out the reaction L-arabinose(out) + ATP + H2O = L-arabinose(in) + ADP + phosphate + H(+). Part of the ABC transporter complex AraFGH involved in arabinose import. Responsible for energy coupling to the transport system. The protein is Arabinose import ATP-binding protein AraG 2 of Burkholderia cenocepacia (strain HI2424).